We begin with the raw amino-acid sequence, 367 residues long: Ferrochelatase (367 aa).

Fe cation contacts are provided by histidine 213 and glutamate 294.

It belongs to the ferrochelatase family.

It localises to the cytoplasm. It catalyses the reaction heme b + 2 H(+) = protoporphyrin IX + Fe(2+). The protein operates within porphyrin-containing compound metabolism; protoheme biosynthesis; protoheme from protoporphyrin-IX: step 1/1. Its function is as follows. Catalyzes the ferrous insertion into protoporphyrin IX. The chain is Ferrochelatase from Polaromonas sp. (strain JS666 / ATCC BAA-500).